Consider the following 230-residue polypeptide: Large ribosomal subunit protein uL1 (230 aa).

The protein belongs to the universal ribosomal protein uL1 family. In terms of assembly, part of the 50S ribosomal subunit.

Functionally, binds directly to 23S rRNA. The L1 stalk is quite mobile in the ribosome, and is involved in E site tRNA release. Protein L1 is also a translational repressor protein, it controls the translation of the L11 operon by binding to its mRNA. The protein is Large ribosomal subunit protein uL1 of Nitrobacter hamburgensis (strain DSM 10229 / NCIMB 13809 / X14).